The following is a 513-amino-acid chain: ATP synthase subunit alpha (513 aa).

169 to 176 (GDRQTGKS) is a binding site for ATP.

The protein belongs to the ATPase alpha/beta chains family. In terms of assembly, F-type ATPases have 2 components, CF(1) - the catalytic core - and CF(0) - the membrane proton channel. CF(1) has five subunits: alpha(3), beta(3), gamma(1), delta(1), epsilon(1). CF(0) has three main subunits: a(1), b(2) and c(9-12). The alpha and beta chains form an alternating ring which encloses part of the gamma chain. CF(1) is attached to CF(0) by a central stalk formed by the gamma and epsilon chains, while a peripheral stalk is formed by the delta and b chains.

It localises to the cell inner membrane. The catalysed reaction is ATP + H2O + 4 H(+)(in) = ADP + phosphate + 5 H(+)(out). In terms of biological role, produces ATP from ADP in the presence of a proton gradient across the membrane. The alpha chain is a regulatory subunit. The chain is ATP synthase subunit alpha from Blochmanniella floridana.